We begin with the raw amino-acid sequence, 472 residues long: D-2-hydroxyglutarate dehydrogenase (472 aa).

Residues 36-215 (WTPNPLAIAL…VEATLRLTDP (180 aa)) enclose the FAD-binding PCMH-type domain. The (R)-2-hydroxyglutarate site is built by R323, T327, and K337. Residues R323, T327, and K337 each coordinate (R)-malate. The Zn(2+) site is built by H372 and H379. N381 lines the (R)-2-hydroxyglutarate pocket. E418 lines the Zn(2+) pocket. H419 contributes to the (R)-2-hydroxyglutarate binding site. H419 is a binding site for (R)-malate.

It belongs to the FAD-binding oxidoreductase/transferase type 4 family. Homodimer. It depends on FAD as a cofactor.

The catalysed reaction is (R)-2-hydroxyglutarate + A = 2-oxoglutarate + AH2. It catalyses the reaction (R)-malate + A = oxaloacetate + AH2. With respect to regulation, activated by Zn(2+) ions. In terms of biological role, catalyzes the dehydrogenation of (R)-2-hydroxyglutarate (D-2-hydroxyglutarate) to 2-oxoglutarate. Also has a low activity on D-malate in vitro. Is functionally tied to L-serine biosynthesis, via its coupling with the D-3-phosphoglycerate dehydrogenase SerA, encoded by the adjacent gene in the locus. Active in vitro with the artificial electron acceptor 2,6-dichlorophenolindophenol (DCPIP), but not with NAD, NADP, or cytochrome c. Also displays a very low oxidase activity in vitro on D-2-hydroxyglutarate and L-2-hydroxyglutarate with O2 as the electron acceptor, but this activity is most likely not physiological. This Xanthomonas citri pv. viticola (strain LMG 965 / NCPPB 2475 / ICMP 3867 / CFBP 7660) (Xanthomonas campestris pv. viticola) protein is D-2-hydroxyglutarate dehydrogenase.